We begin with the raw amino-acid sequence, 30 residues long: Conopeptide Vi002 (30 aa).

In terms of tissue distribution, expressed by the venom gland.

It is found in the secreted. This chain is Conopeptide Vi002, found in Conus virgo (Virgin cone).